We begin with the raw amino-acid sequence, 406 residues long: Argininosuccinate synthase (406 aa).

Residues 12 to 20 and Ala39 contribute to the ATP site; that span reads AYSGGLDTS. L-citrulline contacts are provided by Tyr90 and Ser95. An ATP-binding site is contributed by Gly120. Thr122, Asn126, and Asp127 together coordinate L-aspartate. Asn126 is a binding site for L-citrulline. L-citrulline-binding residues include Arg130, Ser179, Ser188, Glu264, and Tyr276.

This sequence belongs to the argininosuccinate synthase family. Type 1 subfamily. In terms of assembly, homotetramer.

It is found in the cytoplasm. It carries out the reaction L-citrulline + L-aspartate + ATP = 2-(N(omega)-L-arginino)succinate + AMP + diphosphate + H(+). The protein operates within amino-acid biosynthesis; L-arginine biosynthesis; L-arginine from L-ornithine and carbamoyl phosphate: step 2/3. The protein is Argininosuccinate synthase of Geotalea daltonii (strain DSM 22248 / JCM 15807 / FRC-32) (Geobacter daltonii).